The following is a 228-amino-acid chain: 2,3-bisphosphoglycerate-dependent phosphoglycerate mutase (228 aa).

Residues 8-15 (RHGQSAWN), 21-22 (TG), R60, 87-90 (ERHY), K98, 114-115 (RR), and 180-181 (GN) contribute to the substrate site. H9 functions as the Tele-phosphohistidine intermediate in the catalytic mechanism. The Proton donor/acceptor role is filled by E87.

Belongs to the phosphoglycerate mutase family. BPG-dependent PGAM subfamily. As to quaternary structure, homodimer.

It catalyses the reaction (2R)-2-phosphoglycerate = (2R)-3-phosphoglycerate. The protein operates within carbohydrate degradation; glycolysis; pyruvate from D-glyceraldehyde 3-phosphate: step 3/5. Its function is as follows. Catalyzes the interconversion of 2-phosphoglycerate and 3-phosphoglycerate. This chain is 2,3-bisphosphoglycerate-dependent phosphoglycerate mutase, found in Rhizorhabdus wittichii (strain DSM 6014 / CCUG 31198 / JCM 15750 / NBRC 105917 / EY 4224 / RW1) (Sphingomonas wittichii).